A 207-amino-acid polypeptide reads, in one-letter code: Large ribosomal subunit protein uL4 (207 aa).

The tract at residues 48-89 (SHKVKNRSEVRGGGRKPWRQKGTGRARQGSIRSPQWRGGGVV) is disordered. Basic residues predominate over residues 60–71 (GGRKPWRQKGTG).

It belongs to the universal ribosomal protein uL4 family. In terms of assembly, part of the 50S ribosomal subunit.

One of the primary rRNA binding proteins, this protein initially binds near the 5'-end of the 23S rRNA. It is important during the early stages of 50S assembly. It makes multiple contacts with different domains of the 23S rRNA in the assembled 50S subunit and ribosome. Its function is as follows. Forms part of the polypeptide exit tunnel. This chain is Large ribosomal subunit protein uL4, found in Bacillus velezensis (strain DSM 23117 / BGSC 10A6 / LMG 26770 / FZB42) (Bacillus amyloliquefaciens subsp. plantarum).